The primary structure comprises 89 residues: Cell division topological specificity factor (89 aa).

It belongs to the MinE family.

In terms of biological role, prevents the cell division inhibition by proteins MinC and MinD at internal division sites while permitting inhibition at polar sites. This ensures cell division at the proper site by restricting the formation of a division septum at the midpoint of the long axis of the cell. The chain is Cell division topological specificity factor from Klebsiella pneumoniae (strain 342).